A 659-amino-acid chain; its full sequence is Cyclic-di-AMP phosphodiesterase GdpP (659 aa).

The Cytoplasmic segment spans residues 1–8; that stretch reads MPSFYEKP. Helical transmembrane passes span 9–29 and 30–50; these read LFRY…LISF and YFNW…LFFI. The Cytoplasmic portion of the chain corresponds to 51–659; the sequence is KRADSLIRQE…DEYFEGGVQR (609 aa). Residues 84-149 form a PAS-like domain, required for heme-binding region; that stretch reads PIGIMLFNDQ…NDRKFRVVIK (66 aa). The GGDEF domain maps to 173 to 301; it reads ERTVLAYIFL…GGDQVAIKLP (129 aa). A DHH domain region spans residues 339–496; sequence NVIIMGHKFP…IEATALLAGI (158 aa). His-345, Asp-349, Asp-351, Asp-420, His-444, and Asp-499 together coordinate Mn(2+). A DHHA1 domain region spans residues 591–646; sequence FAVARRDEQTVCISARSLGEVNVQIIMEALEGGGHLTNAATQLSGISVSEALERLK.

Belongs to the GdpP/PdeA phosphodiesterase family. The cofactor is heme b. Mg(2+) serves as cofactor. Mn(2+) is required as a cofactor.

The protein localises to the cell membrane. The catalysed reaction is 3',3'-c-di-AMP + H2O = 5'-O-phosphonoadenylyl-(3'-&gt;5')-adenosine + H(+). With respect to regulation, phosphodiesterase (PDE) inhibited by Zn(2+), Ca(2+) inhibits in the presence of Mg(2+) but not Mn(2+); c-di-AMP PDE activity is competitively inhibited by ppGpp. Heme binding (by Fe(2+) or Fe(3+) heme) inhibits PDE, activity is partially restored by KCN or NO only for Fe(2+) heme. Binding of NO to Fe(2+) heme switches from hexa- to pentacoordination. Heme binding inhibits the ATPase activity. Its function is as follows. Has phosphodiesterase (PDE) activity against cyclic-di-AMP (c-di-AMP) and to a much lesser extent against cyclic-di-GMP (c-di-GMP) in the DHH/DHHA1 domains. Also has ATPase activity, probably via the GGDEF domain. Overexpression leads to increased sensitivity to methyl methanesulfonate (MMS) and H(2)O(2). Overexpression leads to extreme sensitivity to the beta-lactam antibiotic cefuroxime (CEF), probably dependent on PDE activity. May monitor cellular heme or NO levels. In B.subtilis c-di-AMP is a second messenger that mediates growth, DNA repair and cell wall homeostasis; it is toxic when present in excess. The polypeptide is Cyclic-di-AMP phosphodiesterase GdpP (Bacillus subtilis (strain 168)).